A 339-amino-acid chain; its full sequence is Lipoate-protein ligase A (339 aa).

The BPL/LPL catalytic domain occupies 28–211; the sequence is NPDSHTLFLW…AFREYYRDTD (184 aa). Residues arginine 70, 75–78, and lysine 129 contribute to the ATP site; that span reads GAVF. A (R)-lipoate-binding site is contributed by lysine 129.

Belongs to the LplA family. In terms of assembly, monomer.

The protein resides in the cytoplasm. The enzyme catalyses L-lysyl-[lipoyl-carrier protein] + (R)-lipoate + ATP = N(6)-[(R)-lipoyl]-L-lysyl-[lipoyl-carrier protein] + AMP + diphosphate + H(+). Its pathway is protein modification; protein lipoylation via exogenous pathway; protein N(6)-(lipoyl)lysine from lipoate: step 1/2. It functions in the pathway protein modification; protein lipoylation via exogenous pathway; protein N(6)-(lipoyl)lysine from lipoate: step 2/2. Its function is as follows. Catalyzes both the ATP-dependent activation of exogenously supplied lipoate to lipoyl-AMP and the transfer of the activated lipoyl onto the lipoyl domains of lipoate-dependent enzymes. The sequence is that of Lipoate-protein ligase A from Psychrobacter cryohalolentis (strain ATCC BAA-1226 / DSM 17306 / VKM B-2378 / K5).